The following is a 324-amino-acid chain: Transcription factor MYB74 (324 aa).

HTH myb-type domains are found at residues 10–62 (KNGL…TNYL) and 63–117 (RPDI…RKRL). 2 DNA-binding regions (H-T-H motif) span residues 38-62 (WRTL…TNYL) and 90-113 (WSAI…NTHI).

In terms of tissue distribution, highly expressed in flowers and at lower levels in rosette leaves and cauline leaves. Expressed at low levels in roots, stems and siliques.

The protein localises to the nucleus. Functionally, probable transcription factor that may function in salt stress response. This Arabidopsis thaliana (Mouse-ear cress) protein is Transcription factor MYB74.